The following is a 348-amino-acid chain: Dihydroorotase (348 aa).

Residues His14 and His16 each coordinate Zn(2+). Residues 16 to 18 and Asn42 each bind substrate; that span reads HLR. Positions 100, 137, and 175 each coordinate Zn(2+). Residue Lys100 is modified to N6-carboxylysine. His137 is a binding site for substrate. Leu220 serves as a coordination point for substrate. Position 248 (Asp248) interacts with Zn(2+). Asp248 is a catalytic residue. The substrate site is built by His252 and Ala264.

The protein belongs to the metallo-dependent hydrolases superfamily. DHOase family. Class II DHOase subfamily. In terms of assembly, homodimer. It depends on Zn(2+) as a cofactor.

The enzyme catalyses (S)-dihydroorotate + H2O = N-carbamoyl-L-aspartate + H(+). It functions in the pathway pyrimidine metabolism; UMP biosynthesis via de novo pathway; (S)-dihydroorotate from bicarbonate: step 3/3. Its function is as follows. Catalyzes the reversible cyclization of carbamoyl aspartate to dihydroorotate. This is Dihydroorotase from Pseudomonas putida (strain W619).